The sequence spans 103 residues: Large ribosomal subunit protein bL21 (103 aa).

The protein belongs to the bacterial ribosomal protein bL21 family. Part of the 50S ribosomal subunit. Contacts protein L20.

Functionally, this protein binds to 23S rRNA in the presence of protein L20. The polypeptide is Large ribosomal subunit protein bL21 (Haemophilus influenzae (strain PittEE)).